We begin with the raw amino-acid sequence, 205 residues long: Small ribosomal subunit protein uS4 (205 aa).

A compositionally biased stretch (basic residues) spans 1-12 (MSKRIQAKHKLD). Positions 1–49 (MSKRIQAKHKLDRRMGQNIWGRPKSPVNRREYGPGQHGQRRKGKLSDFG) are disordered. Positions 94–156 (RRLDAVIYRA…SKQLEIVVVA (63 aa)) constitute an S4 RNA-binding domain.

The protein belongs to the universal ribosomal protein uS4 family. Part of the 30S ribosomal subunit. Contacts protein S5. The interaction surface between S4 and S5 is involved in control of translational fidelity.

Its function is as follows. One of the primary rRNA binding proteins, it binds directly to 16S rRNA where it nucleates assembly of the body of the 30S subunit. In terms of biological role, with S5 and S12 plays an important role in translational accuracy. The protein is Small ribosomal subunit protein uS4 of Methylobacterium nodulans (strain LMG 21967 / CNCM I-2342 / ORS 2060).